Consider the following 527-residue polypeptide: FAD-dependent monooxygenase CTB5 (527 aa).

The FAD-binding PCMH-type domain occupies 78-255; the sequence is SDLHPSCIAL…TAVTLKTFGQ (178 aa).

It belongs to the oxygen-dependent FAD-linked oxidoreductase family.

The protein operates within mycotoxin biosynthesis. In terms of biological role, FAD-dependent monooxygenase; part of the gene cluster that mediates the biosynthesis of cercosporin, a light-activated, non-host-selective toxin. The perylenequinone chromophore of cercosporin absorbs light energy to attain an electronically-activated triplet state and produces active oxygen species such as the hydroxyl radical, superoxide, hydrogen peroxide or singlet oxygen upon reaction with oxygen molecules. These reactive oxygen species cause damage to various cellular components including lipids, proteins and nucleic acids. The first step of cercosporin biosynthesis is performed by the polyketide synthase CTB1 which catalyzes the formation of nor-toralactone. The starter unit acyltransferase (SAT) domain of CTB1 initiates polyketide extension by the selective utilization of acetyl-CoA, which is elongated to the heptaketide in the beta-ketoacyl synthase (KS) domain by successive condensations with six malonyl units introduced by the malonyl acyltransferase (MAT) domain. The product template (PT) domain catalyzes C4-C9 and C2-C11 aldol cyclizations and dehydrations to a trihydroxynaphthalene, which is thought to be delivered to the thioesterase (TE) domain for product release. The bifunctional enzyme CTB3 then methylates nor-toralactone to toralactone before conducting an unusual oxidative aromatic ring opening. The O-methyltransferase CTB2 further methylates the nascent OH-6 of the CBT3 product, blocking further oxidation at this site before the reductase CTB6 reduces the 2-oxopropyl ketone at position C7, giving naphthalene. The FAD-dependent monooxygenase CTB5 in concert with the multicopper oxidase CTB12 are responsible for homodimerization of naphthalene with CTB7 installing the dioxepine moiety, finally producing cercosporin. The fasciclin domain-containing protein CTB11 might act with CTB5 and CTB12 whereas the roles of CTB9 and CTB10 have still to be elucidated. This Cercospora beticola (Sugarbeet leaf spot fungus) protein is FAD-dependent monooxygenase CTB5.